Reading from the N-terminus, the 566-residue chain is Oxygen-dependent choline dehydrogenase (566 aa).

7–36 (DYIICGAGSAGNVLATRLTEDPNVTVLLLE) is a binding site for FAD. Residues 182–204 (YQQEGFGPMDRTVTPKGRRASTA) form a disordered region. Residue H474 is the Proton acceptor of the active site.

The protein belongs to the GMC oxidoreductase family. FAD serves as cofactor.

It carries out the reaction choline + A = betaine aldehyde + AH2. It catalyses the reaction betaine aldehyde + NAD(+) + H2O = glycine betaine + NADH + 2 H(+). The protein operates within amine and polyamine biosynthesis; betaine biosynthesis via choline pathway; betaine aldehyde from choline (cytochrome c reductase route): step 1/1. In terms of biological role, involved in the biosynthesis of the osmoprotectant glycine betaine. Catalyzes the oxidation of choline to betaine aldehyde and betaine aldehyde to glycine betaine at the same rate. In Burkholderia multivorans (strain ATCC 17616 / 249), this protein is Oxygen-dependent choline dehydrogenase.